A 96-amino-acid chain; its full sequence is Glutamyl-tRNA(Gln) amidotransferase subunit C (96 aa).

It belongs to the GatC family. As to quaternary structure, heterotrimer of A, B and C subunits.

It catalyses the reaction L-glutamyl-tRNA(Gln) + L-glutamine + ATP + H2O = L-glutaminyl-tRNA(Gln) + L-glutamate + ADP + phosphate + H(+). The enzyme catalyses L-aspartyl-tRNA(Asn) + L-glutamine + ATP + H2O = L-asparaginyl-tRNA(Asn) + L-glutamate + ADP + phosphate + 2 H(+). Allows the formation of correctly charged Asn-tRNA(Asn) or Gln-tRNA(Gln) through the transamidation of misacylated Asp-tRNA(Asn) or Glu-tRNA(Gln) in organisms which lack either or both of asparaginyl-tRNA or glutaminyl-tRNA synthetases. The reaction takes place in the presence of glutamine and ATP through an activated phospho-Asp-tRNA(Asn) or phospho-Glu-tRNA(Gln). The chain is Glutamyl-tRNA(Gln) amidotransferase subunit C from Nostoc sp. (strain PCC 7120 / SAG 25.82 / UTEX 2576).